A 570-amino-acid polypeptide reads, in one-letter code: Urease subunit alpha (570 aa).

The region spanning 131–570 is the Urease domain; the sequence is GGFDSHIHFI…LPMAQRYFMY (440 aa). Positions 136, 138, and 219 each coordinate Ni(2+). Lysine 219 is modified (N6-carboxylysine). Histidine 221 lines the substrate pocket. Residues histidine 248 and histidine 274 each contribute to the Ni(2+) site. The Proton donor role is filled by histidine 322. Aspartate 362 provides a ligand contact to Ni(2+).

This sequence belongs to the metallo-dependent hydrolases superfamily. Urease alpha subunit family. Heterotrimer of UreA (gamma), UreB (beta) and UreC (alpha) subunits. Three heterotrimers associate to form the active enzyme. Ni cation serves as cofactor. In terms of processing, carboxylation allows a single lysine to coordinate two nickel ions.

It localises to the cytoplasm. It catalyses the reaction urea + 2 H2O + H(+) = hydrogencarbonate + 2 NH4(+). It participates in nitrogen metabolism; urea degradation; CO(2) and NH(3) from urea (urease route): step 1/1. The protein is Urease subunit alpha of Rhodopseudomonas palustris (strain HaA2).